The sequence spans 226 residues: Phosphoglycolate phosphatase (226 aa).

Residue aspartate 10 is the Nucleophile of the active site. Mg(2+) is bound by residues aspartate 10, aspartate 12, and aspartate 175.

This sequence belongs to the HAD-like hydrolase superfamily. CbbY/CbbZ/Gph/YieH family. Mg(2+) is required as a cofactor.

The catalysed reaction is 2-phosphoglycolate + H2O = glycolate + phosphate. Its pathway is organic acid metabolism; glycolate biosynthesis; glycolate from 2-phosphoglycolate: step 1/1. Specifically catalyzes the dephosphorylation of 2-phosphoglycolate. Is involved in the dissimilation of the intracellular 2-phosphoglycolate formed during the DNA repair of 3'-phosphoglycolate ends, a major class of DNA lesions induced by oxidative stress. The polypeptide is Phosphoglycolate phosphatase (Vibrio cholerae serotype O1 (strain ATCC 39315 / El Tor Inaba N16961)).